The chain runs to 257 residues: Probable pectate lyase E (257 aa).

The first 17 residues, 1–17, serve as a signal peptide directing secretion; sequence MYQKLLLVPLLLTSALA.

The protein belongs to the polysaccharide lyase 3 family. Requires Ca(2+) as cofactor.

It is found in the secreted. It carries out the reaction Eliminative cleavage of (1-&gt;4)-alpha-D-galacturonan to give oligosaccharides with 4-deoxy-alpha-D-galact-4-enuronosyl groups at their non-reducing ends.. Pectinolytic enzyme consist of four classes of enzymes: pectin lyase, polygalacturonase, pectin methylesterase and rhamnogalacturonase. Among pectinolytic enzymes, pectin lyase is the most important in depolymerization of pectin, since it cleaves internal glycosidic bonds of highly methylated pectins. Favors pectate, the anion, over pectin, the methyl ester. The sequence is that of Probable pectate lyase E (plyE) from Aspergillus flavus (strain ATCC 200026 / FGSC A1120 / IAM 13836 / NRRL 3357 / JCM 12722 / SRRC 167).